Reading from the N-terminus, the 307-residue chain is Synaptophysin (307 aa).

Over 1–19 (MDVVNQLVAGGQFRVVKEP) the chain is Cytoplasmic. Residues 15 to 222 (VVKEPLGFVK…NLWFVFKETG (208 aa)) form the MARVEL domain. The chain crosses the membrane as a helical span at residues 20 to 43 (LGFVKVLQWVFAIFAFATCGSYTG). Residues 44–101 (ELRLSVECANKTESALNIEVEFEYPFRLHQVYFDAPSCVKGGTTKIFLVGDYSSSAEF) are Vesicular-facing. N53 carries N-linked (GlcNAc...) asparagine glycosylation. Y75 is subject to Phosphotyrosine. The chain crosses the membrane as a helical span at residues 102-125 (FVTVAVFAFLYSMGALATYIFLQN). The Cytoplasmic segment spans residues 126–132 (KYRENNK). A helical transmembrane segment spans residues 133–156 (GPMMDFLATAVFAFMWLVSSSAWA). Residues 157–194 (KGLSDVKMATDPENIIKEMPMCRQTGNTCKELRDPVTS) are Vesicular-facing. The chain crosses the membrane as a helical span at residues 195–218 (GLNTSVVFGFLNLVLWVGNLWFVF). Topologically, residues 219–307 (KETGWAAPFM…GAPTSFSNQM (89 aa)) are cytoplasmic. T221 is subject to Phosphothreonine. Positions 233–307 (GAPEKQPAPG…GAPTSFSNQM (75 aa)) are disordered. Over residues 248 to 258 (AGYGQGPGGYG) the composition is skewed to gly residues. Residues 249–298 (GYGQGPGGYGPQDSYGPQGGYQPDYGQPASGGGGYGPQGDYGQQGYGQQG) are repeats, Gly-rich. Residues 259 to 276 (PQDSYGPQGGYQPDYGQP) are compositionally biased toward low complexity. Phosphotyrosine is present on residues Y273 and Y289. Residues 277-296 (ASGGGGYGPQGDYGQQGYGQ) are compositionally biased toward gly residues.

The protein belongs to the synaptophysin/synaptobrevin family. As to quaternary structure, homohexamer or homotetramer. Interacts with SRCIN1. Interacts with VAMP2; the interaction is inhibited by interaction of VAPM2 with SEPT8. Ubiquitinated; mediated by SIAH1 or SIAH2 and leading to its subsequent proteasomal degradation. Post-translationally, phosphorylated by SRC. In terms of tissue distribution, expressed in the brain with expression in the cerebrum and the cerebellum.

It localises to the cytoplasmic vesicle. The protein resides in the secretory vesicle. The protein localises to the synaptic vesicle membrane. Its subcellular location is the synapse. It is found in the synaptosome. In terms of biological role, possibly involved in structural functions as organizing other membrane components or in targeting the vesicles to the plasma membrane. Involved in the regulation of short-term and long-term synaptic plasticity. This Rattus norvegicus (Rat) protein is Synaptophysin (Syp).